Consider the following 1248-residue polypeptide: ABC transporter B family member 7 (1248 aa).

The next 6 membrane-spanning stretches (helical) occupy residues 32–52 (IVLMVIGTLSAMANGLTQPFM), 82–102 (FLYLAAYAGVVSFLQVSCWMV), 158–175 (FTQLVSSFVGGFTVAFIV), 179–201 (LTLALLPCVPLIVGTGGAMTYIM), 261–281 (GLGIGIMMVVVYCTYGFAIWY), and 299–321 (VITSILTGGMALGQTLPSLNSFA). An ABC transmembrane type-1 1 domain is found at 35-322 (MVIGTLSAMA…TLPSLNSFAA (288 aa)). The ABC transporter 1 domain maps to 357 to 593 (IELRDVYFRY…PEGTYSQLVR (237 aa)). 392-399 (GQSGSGKS) contacts ATP. N-linked (GlcNAc...) asparagine glycans are attached at residues Asn-473 and Asn-652. The helical transmembrane segment at 682 to 702 (VLLLGSLAAVIHGIVFPVQGL) threads the bilayer. The region spanning 683–970 (LLLGSLAAVI…TSTMAPDINK (288 aa)) is the ABC transmembrane type-1 2 domain. The N-linked (GlcNAc...) asparagine glycan is linked to Asn-720. The helical transmembrane segment at 722–742 (SLFWALIFVALGLTDLIVIPL) threads the bilayer. N-linked (GlcNAc...) asparagine glycosylation occurs at Asn-779. 4 consecutive transmembrane segments (helical) span residues 813 to 833 (IIGAFIIAFTANWLLALMALL), 834 to 854 (VAPVMFFQGYYQIKFITGFGA), 914 to 934 (GSYLALYVIESVCFLGGSWLI), and 939 to 959 (ATFGEFFQVFFALTLTAVGVT). Residues 1005-1242 (IELQHVSFRY…SGGAYASLVA (238 aa)) enclose the ABC transporter 2 domain. An ATP-binding site is contributed by 1040–1047 (GESGSGKS). Asn-1094, Asn-1193, and Asn-1244 each carry an N-linked (GlcNAc...) asparagine glycan.

This sequence belongs to the ABC transporter superfamily. ABCB family. Multidrug resistance exporter (TC 3.A.1.201) subfamily.

It localises to the membrane. The sequence is that of ABC transporter B family member 7 (ABCB7) from Arabidopsis thaliana (Mouse-ear cress).